Here is a 682-residue protein sequence, read N- to C-terminus: Polyadenylate-binding protein 5 (682 aa).

4 RRM domains span residues 59-136 (SSLY…LSNR), 146-223 (GNVF…HFVR), 239-316 (TNVY…RAQK), and 342-419 (SNLY…LAQR). The region spanning 588–665 (TISKLASDLA…ALDVLRRSAD (78 aa)) is the PABC domain. Position 600 is a phosphoserine (Ser-600).

This sequence belongs to the polyadenylate-binding protein type-1 family. As to expression, expressed predominantly in immature flowers but also at lower levels in mature flowers and siliques. Detected in tapetum, pollen, ovules and developing seeds. Also detected in primary inflorescences and immature siliques.

It localises to the cytoplasm. It is found in the nucleus. Binds the poly(A) tail of mRNA. Appears to be an important mediator of the multiple roles of the poly(A) tail in mRNA biogenesis, stability and translation. The polypeptide is Polyadenylate-binding protein 5 (PAB5) (Arabidopsis thaliana (Mouse-ear cress)).